The sequence spans 491 residues: Probable glycine dehydrogenase (decarboxylating) subunit 2 (491 aa).

At K273 the chain carries N6-(pyridoxal phosphate)lysine.

This sequence belongs to the GcvP family. C-terminal subunit subfamily. As to quaternary structure, the glycine cleavage system is composed of four proteins: P, T, L and H. In this organism, the P 'protein' is a heterodimer of two subunits. Pyridoxal 5'-phosphate serves as cofactor.

It carries out the reaction N(6)-[(R)-lipoyl]-L-lysyl-[glycine-cleavage complex H protein] + glycine + H(+) = N(6)-[(R)-S(8)-aminomethyldihydrolipoyl]-L-lysyl-[glycine-cleavage complex H protein] + CO2. In terms of biological role, the glycine cleavage system catalyzes the degradation of glycine. The P protein binds the alpha-amino group of glycine through its pyridoxal phosphate cofactor; CO(2) is released and the remaining methylamine moiety is then transferred to the lipoamide cofactor of the H protein. The chain is Probable glycine dehydrogenase (decarboxylating) subunit 2 from Bacillus cereus (strain ATCC 10987 / NRS 248).